Reading from the N-terminus, the 300-residue chain is Ribosomal protein L11 methyltransferase (300 aa).

S-adenosyl-L-methionine-binding residues include T152, G173, D195, and N234.

The protein belongs to the methyltransferase superfamily. PrmA family.

It is found in the cytoplasm. The enzyme catalyses L-lysyl-[protein] + 3 S-adenosyl-L-methionine = N(6),N(6),N(6)-trimethyl-L-lysyl-[protein] + 3 S-adenosyl-L-homocysteine + 3 H(+). Methylates ribosomal protein L11. The chain is Ribosomal protein L11 methyltransferase from Burkholderia pseudomallei (strain K96243).